The following is a 342-amino-acid chain: Dihydroorotate dehydrogenase (quinone) (342 aa).

Residues 60–64 and threonine 84 contribute to the FMN site; that span reads AGLDK. Lysine 64 contacts substrate. Substrate is bound at residue 109-113; it reads NRMGF. Residues asparagine 137 and asparagine 170 each coordinate FMN. Asparagine 170 provides a ligand contact to substrate. Residue serine 173 is the Nucleophile of the active site. Substrate is bound at residue asparagine 175. FMN-binding residues include lysine 215 and threonine 243. Residue 244-245 participates in substrate binding; sequence NT. FMN contacts are provided by residues glycine 266, glycine 295, and 316 to 317; that span reads YS.

Belongs to the dihydroorotate dehydrogenase family. Type 2 subfamily. As to quaternary structure, monomer. It depends on FMN as a cofactor.

It is found in the cell membrane. The catalysed reaction is (S)-dihydroorotate + a quinone = orotate + a quinol. Its pathway is pyrimidine metabolism; UMP biosynthesis via de novo pathway; orotate from (S)-dihydroorotate (quinone route): step 1/1. Its function is as follows. Catalyzes the conversion of dihydroorotate to orotate with quinone as electron acceptor. In Nitrosomonas europaea (strain ATCC 19718 / CIP 103999 / KCTC 2705 / NBRC 14298), this protein is Dihydroorotate dehydrogenase (quinone).